The following is a 326-amino-acid chain: Chain length determinant protein (326 aa).

The Cytoplasmic portion of the chain corresponds to 1-31 (MRVENNNVSGQNHDPEQIDLIDLLVQLWRGK). The helical transmembrane segment at 32 to 52 (MTIIISVIVAIALAIGYLAVA) threads the bilayer. Residues 53 to 295 (KEKWTSTAII…LPIRRDSPKK (243 aa)) lie on the Periplasmic side of the membrane. A helical transmembrane segment spans residues 296–316 (AITLILAVLLGGMVGAGIVLG). Over 317-326 (RNALRNYNAK) the chain is Cytoplasmic.

It belongs to the WzzB/Cld/Rol family. As to quaternary structure, homodimer.

The protein localises to the cell inner membrane. Its pathway is bacterial outer membrane biogenesis; lipopolysaccharide biosynthesis. Confers a modal distribution of chain length on the O-antigen component of lipopolysaccharide (LPS). Gives rise to a reduced number of short chain molecules and increases in numbers of longer molecules. The polypeptide is Chain length determinant protein (wzzB) (Escherichia coli (strain K12)).